Here is a 346-residue protein sequence, read N- to C-terminus: Calcium uniporter protein, mitochondrial (346 aa).

At 1–195 (MTKGKLLTTP…ECDKAAHRGA (195 aa)) the chain is on the mitochondrial matrix side. Positions 55–120 (ELPPPDPQDS…GEGKDEGEFV (66 aa)) are disordered. Composition is skewed to basic and acidic residues over residues 76–91 (MEAK…KADT) and 109–119 (REGEGKDEGEF). The chain crosses the membrane as a helical span at residues 196–216 (QRIALAGCGGLIGYWYIVYRL). At 217–226 (TFETDLGWDV) the chain is on the mitochondrial intermembrane side. The Selectivity filter signature appears at 224 to 232 (WDVMEPVTY). Residues 227-248 (MEPVTYLVGLSTLIGGYMWFLW) traverse the membrane as a helical segment. A Ca(2+)-binding site is contributed by Glu228. The Mitochondrial matrix portion of the chain corresponds to 249-346 (HNREVSYRSA…KEGEEDDEDD (98 aa)). The interval 306-346 (WNETQDEGGDEKVTKALRDERKNNNGTKNKSKEGEEDDEDD) is disordered. The span at 315-328 (DEKVTKALRDERKN) shows a compositional bias: basic and acidic residues.

The protein belongs to the MCU (TC 1.A.77) family. Homotetramer, assembles in a dimer or dimers configuration with two interfaces.

The protein resides in the mitochondrion inner membrane. The catalysed reaction is Ca(2+)(in) = Ca(2+)(out). Functionally, highly selective calcium channel localized to the inner mitochondrial membrane, which mediates calcium uptake into the mitochondrial matrix. Mitochondrial calcium homeostasis plays key roles in cellular physiology and regulates ATP production, cytoplasmic calcium signals and activation of cell death pathways. Sufficient to operate as a pore-forming channel without the need of calcium-sensor or auxiliary subunit. This chain is Calcium uniporter protein, mitochondrial, found in Cyphellophora europaea (strain CBS 101466) (Phialophora europaea).